Here is a 197-residue protein sequence, read N- to C-terminus: Peptide deformylase (197 aa).

Residues Cys-106 and His-148 each contribute to the Fe cation site. Glu-149 is an active-site residue. Fe cation is bound at residue His-152.

It belongs to the polypeptide deformylase family. Requires Fe(2+) as cofactor.

The enzyme catalyses N-terminal N-formyl-L-methionyl-[peptide] + H2O = N-terminal L-methionyl-[peptide] + formate. Functionally, removes the formyl group from the N-terminal Met of newly synthesized proteins. Requires at least a dipeptide for an efficient rate of reaction. N-terminal L-methionine is a prerequisite for activity but the enzyme has broad specificity at other positions. In Mycobacterium marinum (strain ATCC BAA-535 / M), this protein is Peptide deformylase.